Here is a 792-residue protein sequence, read N- to C-terminus: MSSSSIHTTEGSTPNTAGGMGKEPYSNVSGSQRSSDTLKQQKFIVSDAMAKNSRQLLFAHIYNYLVHNKFYSTASQFLKEVEVPLTTIENIGKIKENTVRDDSSQMRYDDIPENLLRPDMLLNASDTFLVEWWEIFRTLFDHVDGIPNESLDSNGNQEVFKQRIMAILPHNNPTVPPPFINGAENLVDPERHMNIARGSSVSQPSGVLRSPTQNELLNNSQDQRPPQFRSKSMMNGMPPGLSSMSTPNGVEGMQGNFERPTFQQSKSAALPTQRKSSIEEQANRNSSNFSGFGSQSPKNVNEDNEIDSKSAKGKLRSKSSKRGKVGKAAGTPKYNEVDEKHSTMQGSPFSPELLGSNNPVLQNQSKPSAQSQMNGSQWDPNFLMQQQRNPQQWQKLNGNNMQQDIPNSSHPSIGSNNPSNTSHRFNSRRKEQYDSKPEAIGNGSHRSSTSPSAGSVGNMSADYGDQNEYGSNKSSNFSGAFTNNNAMFQEMAKTMNLMMNQKSEEMNQWNKSNPYNMRPDNMPMSTMNWNNFPMPKGTSNSFNKDMLQAMQNKMMQSQSSSGMDPNLQQQYLMMMNMLMNFQSGNGFQSNPTNVYKSRGNDLDFAQPFSSENNLANDQSNIRSSYEAYQEDSKTPSTENGGRKMNMTPSLQSTNMISNGQMKHSTSRFSPTHGAPNQSELNKMESTQRGNDISHNYNPPNNRFVGNNLKSQNFSLASQDESVIAAAKKGRRKLTKLNKRNLATPESTSNTNYPESNKNGISTPNGSVGNKGKQTDINGHSNYPDNPFELFNI.

Polar residues predominate over residues 1–16 (MSSSSIHTTEGSTPNT). The disordered stretch occupies residues 1–34 (MSSSSIHTTEGSTPNTAGGMGKEPYSNVSGSQRS). The region spanning 53–85 (SRQLLFAHIYNYLVHNKFYSTASQFLKEVEVPL) is the LisH domain. Polar residues predominate over residues 197–233 (RGSSVSQPSGVLRSPTQNELLNNSQDQRPPQFRSKSM). 4 disordered regions span residues 197 to 377 (RGSS…NGSQ), 397 to 477 (NGNN…SSNF), 624 to 707 (SYEA…VGNN), and 734 to 792 (TKLN…LFNI). The segment covering 285-294 (NSSNFSGFGS) has biased composition (low complexity). A compositionally biased stretch (basic residues) spans 311–325 (AKGKLRSKSSKRGKV). Composition is skewed to polar residues over residues 355–377 (GSNN…NGSQ) and 397–424 (NGNN…TSHR). Residues 428 to 437 (RRKEQYDSKP) are compositionally biased toward basic and acidic residues. 5 stretches are compositionally biased toward polar residues: residues 444-458 (SHRS…SVGN), 468-477 (EYGSNKSSNF), 646-707 (MTPS…VGNN), 743-767 (TPES…NGSV), and 774-783 (TDINGHSNYP).

The protein belongs to the MSS11 family.

It is found in the cytoplasm. The protein resides in the nucleus. Its function is as follows. Transcription factor that regulates pseudohyphal differentiation, invasive growth, floculation, adhesion and starch metabolism in response to nutrient availability. The protein is Transcription activator MSS11 (MSS11) of Candida glabrata (strain ATCC 2001 / BCRC 20586 / JCM 3761 / NBRC 0622 / NRRL Y-65 / CBS 138) (Yeast).